The following is a 189-amino-acid chain: Interferon alpha-8 (189 aa).

The signal sequence occupies residues 1 to 23 (MALTFYLLVALVVLSYKSFSSLG). 2 disulfide bridges follow: C24-C122 and C52-C162.

This sequence belongs to the alpha/beta interferon family.

It localises to the secreted. Produced by macrophages, IFN-alpha have antiviral activities. Interferon stimulates the production of two enzymes: a protein kinase and an oligoadenylate synthetase. The sequence is that of Interferon alpha-8 (IFNA8) from Homo sapiens (Human).